We begin with the raw amino-acid sequence, 42 residues long: GHVPCGKDGRKCGYHADCCNCCLSGICKPSTSWTGCSTSTFD.

Disulfide bonds link Cys-5–Cys-19, Cys-12–Cys-22, Cys-18–Cys-27, and Cys-21–Cys-36.

This sequence belongs to the conotoxin I1 superfamily. In terms of tissue distribution, expressed by the venom duct.

The protein localises to the secreted. Iota-conotoxins bind to voltage-gated sodium channels (Nav) and act as agonists by shifting the voltage-dependence of activation to more hyperpolarized levels. Produces general excitatory symptoms. This is Iota-conotoxin-like R11.1 from Conus radiatus (Rayed cone).